Reading from the N-terminus, the 81-residue chain is Small ribosomal subunit protein uS17 (81 aa).

The protein belongs to the universal ribosomal protein uS17 family. As to quaternary structure, part of the 30S ribosomal subunit.

Functionally, one of the primary rRNA binding proteins, it binds specifically to the 5'-end of 16S ribosomal RNA. This Hyphomonas neptunium (strain ATCC 15444) protein is Small ribosomal subunit protein uS17.